The primary structure comprises 128 residues: Fluoride-specific ion channel FluC (128 aa).

4 helical membrane-spanning segments follow: residues 3 to 23 (FSVI…RFLI), 34 to 54 (LFPV…GFLY), 69 to 89 (FITG…ETLL), and 100 to 120 (FLNI…AIIL). Na(+) contacts are provided by Gly75 and Thr78.

This sequence belongs to the fluoride channel Fluc/FEX (TC 1.A.43) family.

The protein resides in the cell inner membrane. The catalysed reaction is fluoride(in) = fluoride(out). Its activity is regulated as follows. Na(+) is not transported, but it plays an essential structural role and its presence is essential for fluoride channel function. Its function is as follows. Fluoride-specific ion channel. Important for reducing fluoride concentration in the cell, thus reducing its toxicity. The protein is Fluoride-specific ion channel FluC of Nitratiruptor sp. (strain SB155-2).